Consider the following 227-residue polypeptide: MICOS complex subunit Mic19 (227 aa).

Glycine 2 is lipidated: N-myristoyl glycine. Serine 29 carries the post-translational modification Phosphoserine. The tract at residues valine 32–valine 57 is disordered. Positions serine 39–serine 50 are enriched in polar residues. A Phosphotyrosine modification is found at tyrosine 49. Phosphoserine occurs at positions 50, 51, 56, and 58. A disordered region spans residues glutamate 73–glutamate 92. N6-acetyllysine is present on lysine 142. One can recognise a CHCH domain in the interval histidine 180 to methionine 222. 2 consecutive short sequence motifs (cx9C motif) follow at residues cysteine 183–cysteine 193 and cysteine 204–cysteine 214. Intrachain disulfides connect cysteine 183-cysteine 214 and cysteine 193-cysteine 204.

This sequence belongs to the MICOS complex subunit Mic19 family. Metazoan Mic19 subfamily. As to quaternary structure, component of the mitochondrial contact site and cristae organizing system (MICOS) complex, composed of at least MICOS10/MIC10, CHCHD3/MIC19, CHCHD6/MIC25, APOOL/MIC27, IMMT/MIC60, APOO/MIC23/MIC26 and MICOS13/MIC13. This complex was also known under the names MINOS or MitOS complex. The MICOS complex associates with mitochondrial outer membrane proteins SAMM50, MTX1 and MTX2 (together described as components of the mitochondrial outer membrane sorting assembly machinery (SAM) complex) and DNAJC11, mitochondrial inner membrane protein TMEM11 and with HSPA9. The MICOS and SAM complexes together with DNAJC11 are part of a large protein complex spanning both membranes termed the mitochondrial intermembrane space bridging (MIB) complex. Interacts with HSPA1A/HSPA1B and OPA1, preferentially with the soluble OPA1 form.

Its subcellular location is the mitochondrion inner membrane. It localises to the cytoplasm. The protein resides in the nucleus. The protein localises to the mitochondrion. Component of the MICOS complex, a large protein complex of the mitochondrial inner membrane that plays crucial roles in the maintenance of crista junctions, inner membrane architecture, and formation of contact sites to the outer membrane. Has also been shown to function as a transcription factor which binds to the BAG1 promoter and represses BAG1 transcription. Plays an important role in the maintenance of the MICOS complex stability and the mitochondrial cristae morphology. This Mus musculus (Mouse) protein is MICOS complex subunit Mic19 (Chchd3).